The following is a 348-amino-acid chain: GTP 3',8-cyclase (348 aa).

The 219-residue stretch at 24 to 242 (PFGRAVTYLR…EKQFTLTDID (219 aa)) folds into the Radical SAM core domain. Arg-33 contacts GTP. Residues Cys-40 and Cys-44 each contribute to the [4Fe-4S] cluster site. Tyr-46 contacts S-adenosyl-L-methionine. Residue Cys-47 coordinates [4Fe-4S] cluster. GTP is bound at residue Arg-82. Gly-86 provides a ligand contact to S-adenosyl-L-methionine. Residue Thr-115 coordinates GTP. Ser-139 is an S-adenosyl-L-methionine binding site. Lys-175 is a GTP binding site. Met-209 is an S-adenosyl-L-methionine binding site. 2 residues coordinate [4Fe-4S] cluster: Cys-272 and Cys-275. 277-279 (RVR) serves as a coordination point for GTP. Residue Cys-289 participates in [4Fe-4S] cluster binding.

This sequence belongs to the radical SAM superfamily. MoaA family. Monomer and homodimer. The cofactor is [4Fe-4S] cluster.

It catalyses the reaction GTP + AH2 + S-adenosyl-L-methionine = (8S)-3',8-cyclo-7,8-dihydroguanosine 5'-triphosphate + 5'-deoxyadenosine + L-methionine + A + H(+). Its pathway is cofactor biosynthesis; molybdopterin biosynthesis. In terms of biological role, catalyzes the cyclization of GTP to (8S)-3',8-cyclo-7,8-dihydroguanosine 5'-triphosphate. The sequence is that of GTP 3',8-cyclase from Rhizobium etli (strain CIAT 652).